Consider the following 271-residue polypeptide: NADPH-dependent 7-cyano-7-deazaguanine reductase (271 aa).

Ile81–Ser83 is a binding site for substrate. Ser83–Lys84 is an NADPH binding site. Cys177 functions as the Thioimide intermediate in the catalytic mechanism. Residue Asp184 is the Proton donor of the active site. His216–Glu217 contributes to the substrate binding site. NADPH is bound at residue Arg245–Gly246.

This sequence belongs to the GTP cyclohydrolase I family. QueF type 2 subfamily. As to quaternary structure, homodimer.

It is found in the cytoplasm. It carries out the reaction 7-aminomethyl-7-carbaguanine + 2 NADP(+) = 7-cyano-7-deazaguanine + 2 NADPH + 3 H(+). It functions in the pathway tRNA modification; tRNA-queuosine biosynthesis. Catalyzes the NADPH-dependent reduction of 7-cyano-7-deazaguanine (preQ0) to 7-aminomethyl-7-deazaguanine (preQ1). The sequence is that of NADPH-dependent 7-cyano-7-deazaguanine reductase from Xanthomonas campestris pv. campestris (strain B100).